Reading from the N-terminus, the 232-residue chain is Ribosomal RNA small subunit methyltransferase G (232 aa).

S-adenosyl-L-methionine contacts are provided by residues Gly93, Leu98, 144-145 (VE), and Arg163.

It belongs to the methyltransferase superfamily. RNA methyltransferase RsmG family.

The protein localises to the cytoplasm. It catalyses the reaction guanosine(527) in 16S rRNA + S-adenosyl-L-methionine = N(7)-methylguanosine(527) in 16S rRNA + S-adenosyl-L-homocysteine. In terms of biological role, specifically methylates the N7 position of guanine in position 527 of 16S rRNA. The chain is Ribosomal RNA small subunit methyltransferase G from Burkholderia pseudomallei (strain 1710b).